The chain runs to 57 residues: Large ribosomal subunit protein bL32 (57 aa).

Positions 1–16 (MAVQKSRKTRSKRGMR) are enriched in basic residues. Residues 1 to 45 (MAVQKSRKTRSKRGMRRSHDALTAPAQLSVDATSGETHRRHHMTA) are disordered.

It belongs to the bacterial ribosomal protein bL32 family.

This is Large ribosomal subunit protein bL32 from Psychromonas ingrahamii (strain DSM 17664 / CCUG 51855 / 37).